Reading from the N-terminus, the 428-residue chain is Adenylosuccinate synthetase (428 aa).

GTP contacts are provided by residues 12–18 and 40–42; these read GDEGKGK and GHT. Catalysis depends on aspartate 13, which acts as the Proton acceptor. The Mg(2+) site is built by aspartate 13 and glycine 40. IMP is bound by residues 13–16, 38–41, threonine 128, arginine 142, glutamine 223, threonine 238, and arginine 302; these read DEGK and NAGH. Histidine 41 functions as the Proton donor in the catalytic mechanism. Position 298–304 (298–304) interacts with substrate; the sequence is VTTGRPR. GTP-binding positions include arginine 304, 330 to 332, and 412 to 414; these read KLD and GVG.

It belongs to the adenylosuccinate synthetase family. In terms of assembly, homodimer. Mg(2+) serves as cofactor.

Its subcellular location is the cytoplasm. The enzyme catalyses IMP + L-aspartate + GTP = N(6)-(1,2-dicarboxyethyl)-AMP + GDP + phosphate + 2 H(+). It functions in the pathway purine metabolism; AMP biosynthesis via de novo pathway; AMP from IMP: step 1/2. Functionally, plays an important role in the de novo pathway of purine nucleotide biosynthesis. Catalyzes the first committed step in the biosynthesis of AMP from IMP. The chain is Adenylosuccinate synthetase from Halothermothrix orenii (strain H 168 / OCM 544 / DSM 9562).